The chain runs to 484 residues: Glutamate--tRNA ligase (484 aa).

A 'HIGH' region motif is present at residues 11–21; sequence PSPTGYLHIGN. A 'KMSKS' region motif is present at residues 252–256; sequence KLSKR. Lys-255 is an ATP binding site.

This sequence belongs to the class-I aminoacyl-tRNA synthetase family. Glutamate--tRNA ligase type 1 subfamily. Monomer.

It is found in the cytoplasm. It carries out the reaction tRNA(Glu) + L-glutamate + ATP = L-glutamyl-tRNA(Glu) + AMP + diphosphate. In terms of biological role, catalyzes the attachment of glutamate to tRNA(Glu) in a two-step reaction: glutamate is first activated by ATP to form Glu-AMP and then transferred to the acceptor end of tRNA(Glu). This is Glutamate--tRNA ligase from Staphylococcus saprophyticus subsp. saprophyticus (strain ATCC 15305 / DSM 20229 / NCIMB 8711 / NCTC 7292 / S-41).